A 157-amino-acid chain; its full sequence is SsrA-binding protein (157 aa).

The protein belongs to the SmpB family.

The protein localises to the cytoplasm. Functionally, required for rescue of stalled ribosomes mediated by trans-translation. Binds to transfer-messenger RNA (tmRNA), required for stable association of tmRNA with ribosomes. tmRNA and SmpB together mimic tRNA shape, replacing the anticodon stem-loop with SmpB. tmRNA is encoded by the ssrA gene; the 2 termini fold to resemble tRNA(Ala) and it encodes a 'tag peptide', a short internal open reading frame. During trans-translation Ala-aminoacylated tmRNA acts like a tRNA, entering the A-site of stalled ribosomes, displacing the stalled mRNA. The ribosome then switches to translate the ORF on the tmRNA; the nascent peptide is terminated with the 'tag peptide' encoded by the tmRNA and targeted for degradation. The ribosome is freed to recommence translation, which seems to be the essential function of trans-translation. The protein is SsrA-binding protein of Clostridium novyi (strain NT).